Here is a 412-residue protein sequence, read N- to C-terminus: Cytochrome P450-SOY (412 aa).

The segment covering 1-25 (MTESTTDPARQNLDPTSPAPATSFP) has biased composition (polar residues). Residues 1–38 (MTESTTDPARQNLDPTSPAPATSFPQDRGCPYHPPAGY) form a disordered region. A heme-binding site is contributed by Cys361.

It belongs to the cytochrome P450 family. Requires heme as cofactor.

The protein localises to the cytoplasm. The polypeptide is Cytochrome P450-SOY (cyp105D1) (Streptomyces griseus).